Consider the following 299-residue polypeptide: MTRTDGDQWDIVSSVGFTALMVSSFRALETTRTEPLIRDEYARAFVEASGEPRLTEALAAGTPESEWDTATVYLVNHLAVRTKYFDEFFAAATGSGIQQVVILAAGLDSRVYRLPWPDGTVVYELDQPKVLEFKDHVLREEHAVPLAERREVAVDLRDDWIAALRTAGFDATKPTAWLAEGLLAYLPGAAQDALFENITAHSAPGSFLATEWRRRQATAGQWQDAVNKLKPEFIKDISIGSLIYDDERQDPIEWLREHGWQVDTANRLEQAAAYGRPAPSEHSDVTSLWSDAYFITATR.

Residues aspartate 126 and aspartate 155–leucine 156 contribute to the S-adenosyl-L-methionine site.

This sequence belongs to the UPF0677 family.

Functionally, exhibits S-adenosyl-L-methionine-dependent methyltransferase activity. This chain is Putative S-adenosyl-L-methionine-dependent methyltransferase MAB_0027c, found in Mycobacteroides abscessus (strain ATCC 19977 / DSM 44196 / CCUG 20993 / CIP 104536 / JCM 13569 / NCTC 13031 / TMC 1543 / L948) (Mycobacterium abscessus).